A 209-amino-acid chain; its full sequence is Thiamine-phosphate synthase (209 aa).

4-amino-2-methyl-5-(diphosphooxymethyl)pyrimidine is bound by residues 36–40 (QYRDK) and asparagine 68. Aspartate 69 and aspartate 87 together coordinate Mg(2+). Residue threonine 106 participates in 4-amino-2-methyl-5-(diphosphooxymethyl)pyrimidine binding. 133-135 (SST) provides a ligand contact to 2-[(2R,5Z)-2-carboxy-4-methylthiazol-5(2H)-ylidene]ethyl phosphate. Residue lysine 136 coordinates 4-amino-2-methyl-5-(diphosphooxymethyl)pyrimidine. Glycine 163 provides a ligand contact to 2-[(2R,5Z)-2-carboxy-4-methylthiazol-5(2H)-ylidene]ethyl phosphate.

It belongs to the thiamine-phosphate synthase family. Requires Mg(2+) as cofactor.

The catalysed reaction is 2-[(2R,5Z)-2-carboxy-4-methylthiazol-5(2H)-ylidene]ethyl phosphate + 4-amino-2-methyl-5-(diphosphooxymethyl)pyrimidine + 2 H(+) = thiamine phosphate + CO2 + diphosphate. The enzyme catalyses 2-(2-carboxy-4-methylthiazol-5-yl)ethyl phosphate + 4-amino-2-methyl-5-(diphosphooxymethyl)pyrimidine + 2 H(+) = thiamine phosphate + CO2 + diphosphate. It catalyses the reaction 4-methyl-5-(2-phosphooxyethyl)-thiazole + 4-amino-2-methyl-5-(diphosphooxymethyl)pyrimidine + H(+) = thiamine phosphate + diphosphate. Its pathway is cofactor biosynthesis; thiamine diphosphate biosynthesis; thiamine phosphate from 4-amino-2-methyl-5-diphosphomethylpyrimidine and 4-methyl-5-(2-phosphoethyl)-thiazole: step 1/1. In terms of biological role, condenses 4-methyl-5-(beta-hydroxyethyl)thiazole monophosphate (THZ-P) and 2-methyl-4-amino-5-hydroxymethyl pyrimidine pyrophosphate (HMP-PP) to form thiamine monophosphate (TMP). The chain is Thiamine-phosphate synthase from Azotobacter vinelandii (strain DJ / ATCC BAA-1303).